A 466-amino-acid polypeptide reads, in one-letter code: 23S rRNA (uracil(1939)-C(5))-methyltransferase RlmD (466 aa).

Residues 1-54 (MVDVLNIESLDLEARGIAHRDGKVLFVEGALPGERVTVQTVRRKPSYEIAKVEE) enclose the TRAM domain. [4Fe-4S] cluster-binding residues include Cys-67, Cys-73, Cys-76, and Cys-155. Residues Gln-264, Phe-293, Asn-298, Glu-314, Asn-342, and Asp-363 each coordinate S-adenosyl-L-methionine. Cys-393 (nucleophile) is an active-site residue.

This sequence belongs to the class I-like SAM-binding methyltransferase superfamily. RNA M5U methyltransferase family. RlmD subfamily.

It carries out the reaction uridine(1939) in 23S rRNA + S-adenosyl-L-methionine = 5-methyluridine(1939) in 23S rRNA + S-adenosyl-L-homocysteine + H(+). Its function is as follows. Catalyzes the formation of 5-methyl-uridine at position 1939 (m5U1939) in 23S rRNA. The sequence is that of 23S rRNA (uracil(1939)-C(5))-methyltransferase RlmD from Bordetella parapertussis (strain 12822 / ATCC BAA-587 / NCTC 13253).